The following is a 261-amino-acid chain: MAAILRYQLELFLLAVSFFSRIPVPVSLPYSSERMNQAGRYFALVGLLLGAICALVYSLATQLFSTNISVFLTMVLSLLLTGAFHEDGLADMADGVGGGMTAERRLEIMKDSRIGTYGSSALIMVLLGKYLLLTELADLTSLVPVWLLAYTLSRAVAASLIRNTPYVSDTDSSKSKPLAQQLSGTDVAVLSLTALATLLYFSWQFIGVMIAASLIFRQIFRQWLIRRLGGFTGDCLGAAQQLMEILIYLILLAFLQHEVMI.

7 consecutive transmembrane segments (helical) span residues Leu-9–Pro-29, Tyr-41–Thr-61, Phe-64–Phe-84, Ile-114–Thr-134, Ser-141–Ile-161, Ala-196–Phe-216, and Cys-235–Leu-255.

The protein belongs to the CobS family. The cofactor is Mg(2+).

Its subcellular location is the cell inner membrane. The enzyme catalyses alpha-ribazole + adenosylcob(III)inamide-GDP = adenosylcob(III)alamin + GMP + H(+). It carries out the reaction alpha-ribazole 5'-phosphate + adenosylcob(III)inamide-GDP = adenosylcob(III)alamin 5'-phosphate + GMP + H(+). It participates in cofactor biosynthesis; adenosylcobalamin biosynthesis; adenosylcobalamin from cob(II)yrinate a,c-diamide: step 7/7. Functionally, joins adenosylcobinamide-GDP and alpha-ribazole to generate adenosylcobalamin (Ado-cobalamin). Also synthesizes adenosylcobalamin 5'-phosphate from adenosylcobinamide-GDP and alpha-ribazole 5'-phosphate. The polypeptide is Adenosylcobinamide-GDP ribazoletransferase (Vibrio cholerae serotype O1 (strain ATCC 39541 / Classical Ogawa 395 / O395)).